The chain runs to 295 residues: Glutamyl-Q tRNA(Asp) synthetase (295 aa).

Residues 9-13 and E45 contribute to the L-glutamate site; that span reads RFAPT. A 'HIGH' region motif is present at residues 12-22; it reads PTPSGFLHFGS. Positions 101, 103, 115, and 119 each coordinate Zn(2+). Residues Y172 and R190 each coordinate L-glutamate. The short motif at 228 to 232 is the 'KMSKS' region element; the sequence is KLGKS. K231 lines the ATP pocket.

The protein belongs to the class-I aminoacyl-tRNA synthetase family. GluQ subfamily. The cofactor is Zn(2+).

Its function is as follows. Catalyzes the tRNA-independent activation of glutamate in presence of ATP and the subsequent transfer of glutamate onto a tRNA(Asp). Glutamate is transferred on the 2-amino-5-(4,5-dihydroxy-2-cyclopenten-1-yl) moiety of the queuosine in the wobble position of the QUC anticodon. In Pseudomonas entomophila (strain L48), this protein is Glutamyl-Q tRNA(Asp) synthetase.